The primary structure comprises 98 residues: NADH-ubiquinone oxidoreductase chain 4L (98 aa).

3 helical membrane passes run 1–21, 29–49, and 61–81; these read MTLI…GLLM, ALLC…LTIL, and IILL…LVMV.

It belongs to the complex I subunit 4L family. Core subunit of respiratory chain NADH dehydrogenase (Complex I) which is composed of 45 different subunits.

Its subcellular location is the mitochondrion inner membrane. It catalyses the reaction a ubiquinone + NADH + 5 H(+)(in) = a ubiquinol + NAD(+) + 4 H(+)(out). In terms of biological role, core subunit of the mitochondrial membrane respiratory chain NADH dehydrogenase (Complex I) which catalyzes electron transfer from NADH through the respiratory chain, using ubiquinone as an electron acceptor. Part of the enzyme membrane arm which is embedded in the lipid bilayer and involved in proton translocation. The chain is NADH-ubiquinone oxidoreductase chain 4L (MT-ND4L) from Balaenoptera omurai (Omura's baleen whale).